A 191-amino-acid polypeptide reads, in one-letter code: Potassium-transporting ATPase KdpC subunit (191 aa).

A helical transmembrane segment spans residues 13–35; the sequence is VLFTGLCGLAYPLAITGVAQAVL. The disordered stretch occupies residues 112-132; the sequence is SGPVPADAVTSSASGLDPDIS.

The protein belongs to the KdpC family. In terms of assembly, the system is composed of three essential subunits: KdpA, KdpB and KdpC.

The protein localises to the cell inner membrane. In terms of biological role, part of the high-affinity ATP-driven potassium transport (or Kdp) system, which catalyzes the hydrolysis of ATP coupled with the electrogenic transport of potassium into the cytoplasm. This subunit acts as a catalytic chaperone that increases the ATP-binding affinity of the ATP-hydrolyzing subunit KdpB by the formation of a transient KdpB/KdpC/ATP ternary complex. This is Potassium-transporting ATPase KdpC subunit from Allorhizobium ampelinum (strain ATCC BAA-846 / DSM 112012 / S4) (Agrobacterium vitis (strain S4)).